Here is a 250-residue protein sequence, read N- to C-terminus: 23S rRNA (guanine(2535)-N(1))-methyltransferase (250 aa).

It carries out the reaction guanosine(2535) in 23S rRNA + S-adenosyl-L-methionine = N(1)-methylguanosine(2535) in 23S rRNA + S-adenosyl-L-homocysteine + H(+). Functionally, specifically methylates the guanine-2535 in 23S ribosomal RNA. Confers resistance to antibiotic avilamycin, an orthosomycin antibiotic. The chain is 23S rRNA (guanine(2535)-N(1))-methyltransferase (aviRa) from Streptomyces viridochromogenes.